A 387-amino-acid polypeptide reads, in one-letter code: Patatin-01 (387 aa).

An N-terminal signal peptide occupies residues 1-23 (MATTKSFLILSVMILATTSSTFA). One can recognise a PNPLA domain in the interval 32-230 (LSIDGGGIKG…TVADPALLSV (199 aa)). A GXGXXG motif is present at residues 36-41 (GGGIKG). The GXSXG motif lies at 75 to 79 (GTSTG). Catalysis depends on Ser77, which acts as the Nucleophile. Asn115 is a glycosylation site (N-linked (GlcNAc...) asparagine). The active-site Proton acceptor is Asp216. A DGA/G motif is present at residues 216–218 (DGA). The stretch at 361 to 385 (ETYEEALKRFAKLLSDRKKLRANKA) forms a coiled coil.

The protein belongs to the patatin family. Tuber.

The protein resides in the vacuole. Probable lipolytic acyl hydrolase (LAH), an activity which is thought to be involved in the response of tubers to pathogens. In Solanum tuberosum (Potato), this protein is Patatin-01.